A 417-amino-acid chain; its full sequence is UDP-N-acetylglucosamine 1-carboxyvinyltransferase (417 aa).

22–23 provides a ligand contact to phosphoenolpyruvate; that stretch reads KN. Residue Arg92 coordinates UDP-N-acetyl-alpha-D-glucosamine. The active-site Proton donor is Cys116. Position 116 is a 2-(S-cysteinyl)pyruvic acid O-phosphothioketal (Cys116). UDP-N-acetyl-alpha-D-glucosamine-binding residues include Asp304 and Ile326.

The protein belongs to the EPSP synthase family. MurA subfamily.

Its subcellular location is the cytoplasm. The enzyme catalyses phosphoenolpyruvate + UDP-N-acetyl-alpha-D-glucosamine = UDP-N-acetyl-3-O-(1-carboxyvinyl)-alpha-D-glucosamine + phosphate. Its pathway is cell wall biogenesis; peptidoglycan biosynthesis. Cell wall formation. Adds enolpyruvyl to UDP-N-acetylglucosamine. This chain is UDP-N-acetylglucosamine 1-carboxyvinyltransferase, found in Desulfosudis oleivorans (strain DSM 6200 / JCM 39069 / Hxd3) (Desulfococcus oleovorans).